Reading from the N-terminus, the 126-residue chain is DNA-directed RNA polymerase subunit omega (126 aa).

The protein belongs to the RNA polymerase subunit omega family. In terms of assembly, the RNAP catalytic core consists of 2 alpha, 1 beta, 1 beta' and 1 omega subunit. When a sigma factor is associated with the core the holoenzyme is formed, which can initiate transcription.

The catalysed reaction is RNA(n) + a ribonucleoside 5'-triphosphate = RNA(n+1) + diphosphate. Functionally, promotes RNA polymerase assembly. Latches the N- and C-terminal regions of the beta' subunit thereby facilitating its interaction with the beta and alpha subunits. The sequence is that of DNA-directed RNA polymerase subunit omega from Paramagnetospirillum magneticum (strain ATCC 700264 / AMB-1) (Magnetospirillum magneticum).